The following is a 329-amino-acid chain: GTP 3',8-cyclase (329 aa).

The Radical SAM core domain occupies 8-234 (AFARKYYYLR…QLRQRSDGPA (227 aa)). A GTP-binding site is contributed by R17. C24 and C28 together coordinate [4Fe-4S] cluster. Y30 serves as a coordination point for S-adenosyl-L-methionine. C31 serves as a coordination point for [4Fe-4S] cluster. GTP is bound at residue R68. G72 contributes to the S-adenosyl-L-methionine binding site. T99 serves as a coordination point for GTP. S-adenosyl-L-methionine is bound at residue S123. K160 provides a ligand contact to GTP. S-adenosyl-L-methionine is bound at residue M194. Positions 257 and 260 each coordinate [4Fe-4S] cluster. 262-264 (RLR) contributes to the GTP binding site. C274 lines the [4Fe-4S] cluster pocket.

It belongs to the radical SAM superfamily. MoaA family. As to quaternary structure, monomer and homodimer. [4Fe-4S] cluster serves as cofactor.

The enzyme catalyses GTP + AH2 + S-adenosyl-L-methionine = (8S)-3',8-cyclo-7,8-dihydroguanosine 5'-triphosphate + 5'-deoxyadenosine + L-methionine + A + H(+). The protein operates within cofactor biosynthesis; molybdopterin biosynthesis. Functionally, catalyzes the cyclization of GTP to (8S)-3',8-cyclo-7,8-dihydroguanosine 5'-triphosphate. In Escherichia coli O17:K52:H18 (strain UMN026 / ExPEC), this protein is GTP 3',8-cyclase.